Here is a 414-residue protein sequence, read N- to C-terminus: Esterase FrsA (414 aa).

Belongs to the FrsA family.

It catalyses the reaction a carboxylic ester + H2O = an alcohol + a carboxylate + H(+). In terms of biological role, catalyzes the hydrolysis of esters. This is Esterase FrsA from Escherichia coli O45:K1 (strain S88 / ExPEC).